Consider the following 362-residue polypeptide: Peptide chain release factor 1 (362 aa).

Q240 carries the N5-methylglutamine modification.

It belongs to the prokaryotic/mitochondrial release factor family. In terms of processing, methylated by PrmC. Methylation increases the termination efficiency of RF1.

It localises to the cytoplasm. Its function is as follows. Peptide chain release factor 1 directs the termination of translation in response to the peptide chain termination codons UAG and UAA. In Bifidobacterium longum subsp. infantis (strain ATCC 15697 / DSM 20088 / JCM 1222 / NCTC 11817 / S12), this protein is Peptide chain release factor 1.